The chain runs to 60 residues: MAVPKQKRSRSRTHHKRAKIYRAISVPLEKCPNCGEYKMPHRVCLHCGYYKGKQVLEISE.

The protein belongs to the bacterial ribosomal protein bL32 family.

The sequence is that of Large ribosomal subunit protein bL32 (rpmF) from Thermotoga maritima (strain ATCC 43589 / DSM 3109 / JCM 10099 / NBRC 100826 / MSB8).